The sequence spans 658 residues: Serine/threonine-protein kinase shk1/pak1 (658 aa).

Disordered regions lie at residues 1–21, 39–104, 126–147, and 213–365; these read MERG…ITPI, RKLK…SYDE, GGSS…STVI, and GAKP…QQSN. Over residues 66–98 the composition is skewed to polar residues; that stretch reads PLSQSRTTVSRVSLGSRQHSSSSIRKLQTNVSD. Over residues 129–140 the composition is skewed to low complexity; the sequence is SPTSSYGSGSAS. The 14-residue stretch at 147–160 folds into the CRIB domain; that stretch reads ISSPFDPKHVTHVG. Composition is skewed to low complexity over residues 226 to 254 and 262 to 272; these read PLLS…LYPS and ASSSSSPLLSS. The segment covering 273–300 has biased composition (polar residues); it reads QTVKTTTSNASRQPSPLVSSKSTDNIIR. Residues S301 and S303 each carry the phosphoserine modification. Residues 386 to 637 enclose the Protein kinase domain; it reads YRNFVKIGQG…SGELLRHPFL (252 aa). ATP is bound by residues 392 to 400 and K415; that span reads IGQGASGDV. Residue D505 is the Proton acceptor of the active site.

It belongs to the protein kinase superfamily. STE Ser/Thr protein kinase family. STE20 subfamily. Forms an activated complex with GTP-bound ras-like cdc42. Interacts with skb1 and the SH3 domain of skb5 via its amino-terminal regulatory domain. Skb1, cdc42 and shk1 are able to form a ternary complex in vivo. Interacts with rga8 and may interact with byr2. Autophosphorylated on serine residues.

The protein localises to the cytoplasm. It localises to the cytoskeleton. It is found in the spindle. The enzyme catalyses L-seryl-[protein] + ATP = O-phospho-L-seryl-[protein] + ADP + H(+). It catalyses the reaction L-threonyl-[protein] + ATP = O-phospho-L-threonyl-[protein] + ADP + H(+). Its function is as follows. MAP4K component of the MAPK pathway required for the mating pheromone response. Phosphorylates histone H2B to form H2BS10ph. Phosphorylates tea1. Required for skb1-dependent mitotic inhibitory function. Regulates microtubule dynamics and cell polarity. The protein is Serine/threonine-protein kinase shk1/pak1 (shk1) of Schizosaccharomyces pombe (strain 972 / ATCC 24843) (Fission yeast).